Consider the following 306-residue polypeptide: D-alanine--D-alanine ligase B (306 aa).

Active-site residues include E15 and S150. The region spanning 101-303 is the ATP-grasp domain; the sequence is KLLWQGAGLP…FSQLVVRILE (203 aa). 134–189 is an ATP binding site; it reads ISALGLPVIVKPSREGSSVGMSKVVAENALQDALRLAFQHDEEVLIEKWLSGPEFT. Positions 257, 270, and 272 each coordinate Mg(2+). S281 is a catalytic residue.

The protein belongs to the D-alanine--D-alanine ligase family. Monomer. Requires Mg(2+) as cofactor. Mn(2+) serves as cofactor.

The protein resides in the cytoplasm. It catalyses the reaction 2 D-alanine + ATP = D-alanyl-D-alanine + ADP + phosphate + H(+). It participates in cell wall biogenesis; peptidoglycan biosynthesis. In terms of biological role, cell wall formation. The protein is D-alanine--D-alanine ligase B (ddlB) of Escherichia coli (strain K12).